The following is a 491-amino-acid chain: Transcription factor unc-3 (491 aa).

The interaction with DNA stretch occupies residues 66 to 69 (RKSN). The C5-type zinc finger occupies 154 to 173 (CRVLLTHEVMCSRCCEKKSC). 2 interaction with DNA regions span residues 200 to 207 (NCLKNAGN) and 239 to 242 (NNSK). The interval 240 to 261 (NSKHGRRTKRTDASDDSEYSES) is disordered. Positions 269–355 (PVIKALFPSE…SRGTPLRFSY (87 aa)) constitute an IPT/TIG domain.

It belongs to the COE family. As to quaternary structure, may homodimerise. Interacts with jmjd-3.1. May interact with GFI1 homolog pag-3.

Its subcellular location is the nucleus. Functionally, transcription factor. Involved in motor neuron fate determination and maintenance, acting as an activator of gene expression in a subset of motor neurons. May act in concert with GFI1 homolog pag-3 in motor neuron fate determination. Required to maintain the expression of transcriptional repressors bnc-1 and cfi-1, which play roles in the cell fate of motor neurons. May play a role in the expression of proteins essential for axonal pathfinding and/or neuronal differentiation in both sensory and motor neurons. Cooperates with jmjd-3.1 and wdr-5.1 to ensure robust transdifferentiation of the Y rectal cell to the PDA motor neuron during larval development. This chain is Transcription factor unc-3 (unc-3), found in Caenorhabditis elegans.